The following is a 330-amino-acid chain: Ferredoxin--NADP reductase (330 aa).

7 residues coordinate FAD: glutamate 34, glutamine 42, tyrosine 47, valine 87, phenylalanine 121, aspartate 285, and serine 325.

Belongs to the ferredoxin--NADP reductase type 2 family. As to quaternary structure, homodimer. Requires FAD as cofactor.

The catalysed reaction is 2 reduced [2Fe-2S]-[ferredoxin] + NADP(+) + H(+) = 2 oxidized [2Fe-2S]-[ferredoxin] + NADPH. This is Ferredoxin--NADP reductase from Limosilactobacillus fermentum (strain NBRC 3956 / LMG 18251) (Lactobacillus fermentum).